The chain runs to 345 residues: Phosphate acyltransferase (345 aa).

This sequence belongs to the PlsX family. In terms of assembly, homodimer. Probably interacts with PlsY.

It is found in the cytoplasm. The enzyme catalyses a fatty acyl-[ACP] + phosphate = an acyl phosphate + holo-[ACP]. It functions in the pathway lipid metabolism; phospholipid metabolism. Its function is as follows. Catalyzes the reversible formation of acyl-phosphate (acyl-PO(4)) from acyl-[acyl-carrier-protein] (acyl-ACP). This enzyme utilizes acyl-ACP as fatty acyl donor, but not acyl-CoA. The polypeptide is Phosphate acyltransferase (Thermodesulfovibrio yellowstonii (strain ATCC 51303 / DSM 11347 / YP87)).